We begin with the raw amino-acid sequence, 133 residues long: Small ribosomal subunit protein uS8 (133 aa).

It belongs to the universal ribosomal protein uS8 family. In terms of assembly, part of the 30S ribosomal subunit. Contacts proteins S5 and S12.

Functionally, one of the primary rRNA binding proteins, it binds directly to 16S rRNA central domain where it helps coordinate assembly of the platform of the 30S subunit. This chain is Small ribosomal subunit protein uS8, found in Synechococcus elongatus (strain ATCC 33912 / PCC 7942 / FACHB-805) (Anacystis nidulans R2).